A 334-amino-acid chain; its full sequence is Beta-hexosaminidase (334 aa).

Residues aspartate 60, arginine 68, arginine 133, and 163-164 each bind substrate; that span reads KH. Catalysis depends on histidine 176, which acts as the Proton donor/acceptor. Aspartate 247 functions as the Nucleophile in the catalytic mechanism.

This sequence belongs to the glycosyl hydrolase 3 family. NagZ subfamily.

The protein localises to the cytoplasm. It catalyses the reaction Hydrolysis of terminal non-reducing N-acetyl-D-hexosamine residues in N-acetyl-beta-D-hexosaminides.. Its pathway is cell wall biogenesis; peptidoglycan recycling. Plays a role in peptidoglycan recycling by cleaving the terminal beta-1,4-linked N-acetylglucosamine (GlcNAc) from peptide-linked peptidoglycan fragments, giving rise to free GlcNAc, anhydro-N-acetylmuramic acid and anhydro-N-acetylmuramic acid-linked peptides. This is Beta-hexosaminidase from Xanthomonas oryzae pv. oryzae (strain KACC10331 / KXO85).